A 446-amino-acid polypeptide reads, in one-letter code: Light-independent protochlorophyllide reductase subunit N (446 aa).

3 residues coordinate [4Fe-4S] cluster: C22, C47, and C107.

This sequence belongs to the BchN/ChlN family. Protochlorophyllide reductase is composed of three subunits; ChlL, ChlN and ChlB. Forms a heterotetramer of two ChlB and two ChlN subunits. It depends on [4Fe-4S] cluster as a cofactor.

The protein resides in the plastid. It is found in the chloroplast. The enzyme catalyses chlorophyllide a + oxidized 2[4Fe-4S]-[ferredoxin] + 2 ADP + 2 phosphate = protochlorophyllide a + reduced 2[4Fe-4S]-[ferredoxin] + 2 ATP + 2 H2O. It participates in porphyrin-containing compound metabolism; chlorophyll biosynthesis (light-independent). Functionally, component of the dark-operative protochlorophyllide reductase (DPOR) that uses Mg-ATP and reduced ferredoxin to reduce ring D of protochlorophyllide (Pchlide) to form chlorophyllide a (Chlide). This reaction is light-independent. The NB-protein (ChlN-ChlB) is the catalytic component of the complex. The polypeptide is Light-independent protochlorophyllide reductase subunit N (Mesostigma viride (Green alga)).